Reading from the N-terminus, the 340-residue chain is MSTDKITFLLNWQPTPYHIPIFLAQTKGYFKEQGLDMAILEPTNPSDVTELIGSGKVDMGLKAMIHTLAAKARGFPVTSVASLLDEPFTGVLYLKGSGITEDFQSLKGKKIGYVGEFGKIQIDELTKHYGMKPEDYTAVRCGMNVAKYIIEGKIDAGIGIECMQQVELEEYLAKQGRPASDAKMLRIDKLACLGCCCFCTVLYICNDEFLKKNPEKVRKFLKAIKKATDYVLADPVKAWKEYIDFKPRLNNDLSYKQYQRCYAYFSSSLYNVHRDWKKVTGYGKRLAILPPDYVSNYTNEYLSWPEPEEVSDPLEAQRLMAIHQEKCRQEGTFKRLALPA.

Lysine 62 is modified (N6-(pyridoxal phosphate)lysine). Histidine 66 is an active-site residue. 115–118 (GEFG) is a binding site for pyridoxal 5'-phosphate. The CCCFC; essential for catalytic activity, may be the site of iron coordination signature appears at 195–199 (CCCFC).

This sequence belongs to the NMT1/THI5 family. Homodimer. Requires Fe cation as cofactor.

The catalysed reaction is N(6)-(pyridoxal phosphate)-L-lysyl-[4-amino-5-hydroxymethyl-2-methylpyrimidine phosphate synthase] + L-histidyl-[4-amino-5-hydroxymethyl-2-methylpyrimidine phosphate synthase] + 2 Fe(3+) + 4 H2O = L-lysyl-[4-amino-5-hydroxymethyl-2-methylpyrimidine phosphate synthase] + (2S)-2-amino-5-hydroxy-4-oxopentanoyl-[4-amino-5-hydroxymethyl-2-methylpyrimidine phosphate synthase] + 4-amino-2-methyl-5-(phosphooxymethyl)pyrimidine + 3-oxopropanoate + 2 Fe(2+) + 2 H(+). The protein operates within cofactor biosynthesis; thiamine diphosphate biosynthesis. Functionally, responsible for the formation of the pyrimidine heterocycle in the thiamine biosynthesis pathway. Catalyzes the formation of hydroxymethylpyrimidine phosphate (HMP-P) from histidine and pyridoxal phosphate (PLP). The protein uses PLP and the active site histidine to form HMP-P, generating an inactive enzyme. The enzyme can only undergo a single turnover, which suggests it is a suicide enzyme. The protein is 4-amino-5-hydroxymethyl-2-methylpyrimidine phosphate synthase THI12 of Saccharomyces cerevisiae (strain ATCC 204508 / S288c) (Baker's yeast).